Consider the following 278-residue polypeptide: Pantothenate synthetase (278 aa).

Residue 26-33 participates in ATP binding; that stretch reads MGNLHEGH. The active-site Proton donor is H33. Q57 serves as a coordination point for (R)-pantoate. Position 57 (Q57) interacts with beta-alanine. 144 to 147 serves as a coordination point for ATP; it reads GKKD. Q150 lines the (R)-pantoate pocket. Residues G173 and 181 to 184 contribute to the ATP site; that span reads LSSR.

It belongs to the pantothenate synthetase family. Homodimer.

The protein resides in the cytoplasm. It carries out the reaction (R)-pantoate + beta-alanine + ATP = (R)-pantothenate + AMP + diphosphate + H(+). It functions in the pathway cofactor biosynthesis; (R)-pantothenate biosynthesis; (R)-pantothenate from (R)-pantoate and beta-alanine: step 1/1. In terms of biological role, catalyzes the condensation of pantoate with beta-alanine in an ATP-dependent reaction via a pantoyl-adenylate intermediate. The chain is Pantothenate synthetase from Neisseria meningitidis serogroup A / serotype 4A (strain DSM 15465 / Z2491).